The chain runs to 264 residues: 3-deoxy-manno-octulosonate cytidylyltransferase (264 aa).

This sequence belongs to the KdsB family.

The protein resides in the cytoplasm. It carries out the reaction 3-deoxy-alpha-D-manno-oct-2-ulosonate + CTP = CMP-3-deoxy-beta-D-manno-octulosonate + diphosphate. It functions in the pathway nucleotide-sugar biosynthesis; CMP-3-deoxy-D-manno-octulosonate biosynthesis; CMP-3-deoxy-D-manno-octulosonate from 3-deoxy-D-manno-octulosonate and CTP: step 1/1. The protein operates within bacterial outer membrane biogenesis; lipopolysaccharide biosynthesis. Activates KDO (a required 8-carbon sugar) for incorporation into bacterial lipopolysaccharide in Gram-negative bacteria. This is 3-deoxy-manno-octulosonate cytidylyltransferase from Methylibium petroleiphilum (strain ATCC BAA-1232 / LMG 22953 / PM1).